The primary structure comprises 231 residues: Regulatory protein VanR (231 aa).

In terms of domain architecture, Response regulatory spans 4-117 (KILIVDDEHE…ELIARVKAQL (114 aa)). Asp-53 carries the post-translational modification 4-aspartylphosphate. Residues 131–231 (ENVIVHSGLV…VWGVGYKIEK (101 aa)) constitute a DNA-binding region (ompR/PhoB-type).

Monomer. In terms of processing, phosphorylated by VanS. Dephosphorylated by VanS. Can be phosphorylated nonenzymatically by acetyl-phosphate.

The protein localises to the cytoplasm. Member of the two-component regulatory system VanS/VanR. Binds to the promoter regions of target genes, including vanH and vanR; phosphorylation of VanR increases binding affinity to the vanH and vanR promoters significantly. DNA binding may be inhibited by the cognate sensor protein, VanS. Activates the transcription of vanH, vanA and vanX in response to vancomycin which results in vancomycin resistance. Involved in conferring vancomycin resistance. This Enterococcus faecium (Streptococcus faecium) protein is Regulatory protein VanR (vanR).